Reading from the N-terminus, the 618-residue chain is Glucose starvation modulator protein 1 (618 aa).

A DNA-binding region (zn(2)-C6 fungal-type) is located at residues 20–48 (CEFCHTKHIQCDVGRPCQNCLKRNIGKFC). The interval 325-352 (ANANTHPSHNAKLESECDSSSHSDADLE) is disordered. A compositionally biased stretch (basic and acidic residues) spans 335–352 (AKLESECDSSSHSDADLE). The PAS domain maps to 466-538 (LLDLENMAKL…QIFNELLAFG (73 aa)).

This sequence belongs to the ERT1/acuK family.

The protein resides in the nucleus. In terms of biological role, transcription factor which regulates nonfermentable carbon utilization. Binds specifically to 5'-CGGN(8)CGG-3' and 5'-CGGN(9)CGG-3' sequences in the promoter region. This chain is Glucose starvation modulator protein 1 (GSM1), found in Saccharomyces cerevisiae (strain YJM789) (Baker's yeast).